The primary structure comprises 1876 residues: Phenolphthiocerol/phthiocerol polyketide synthase subunit A (1876 aa).

The Carrier 1 domain occupies 9 to 83; it reads ADLRHWLIDY…ALAAYLAAPE (75 aa). O-(pantetheine 4'-phosphoryl)serine is present on serine 43. The region spanning 101–526 is the Ketosynthase family 3 (KS3) domain; sequence DEPIAVVGMG…GTNAHVVIEQ (426 aa). Residues cysteine 273, histidine 408, and histidine 448 each act as for beta-ketoacyl synthase activity in the active site. An acyltransferase region spans residues 626-950; it reads SPGPGTVFVY…NLNKAHTIHP (325 aa). The active-site For malonyltransferase activity is serine 720. Residues 997–1112 form an N-terminal hotdog fold region; it reads HTTVATVSAS…AQLSSSPSDS (116 aa). A PKS/mFAS DH domain is found at 997-1267; the sequence is HTTVATVSAS…YRALDFGLDV (271 aa). Histidine 1027 (proton acceptor; for dehydratase activity) is an active-site residue. Residues 1102 to 1130 form a disordered region; sequence TAQLSSSPSDSASSLNEHHRANGQPPERA. Residues 1106-1115 are compositionally biased toward low complexity; sequence SSSPSDSASS. Residues 1130 to 1267 form a C-terminal hotdog fold region; the sequence is AHRDLIPDLA…YRALDFGLDV (138 aa). Aspartate 1186 functions as the Proton donor; for dehydratase activity in the catalytic mechanism. 1491-1551 contacts NADP(+); that stretch reads AAYLITGGLG…RRRIDAIRAL (61 aa). The segment at 1491 to 1728 is beta-ketoacyl reductase; sequence AAYLITGGLG…DGYDVAQAVV (238 aa). The region spanning 1759–1836 is the Carrier 2 domain; it reads EVRSELEQGL…SLASYLAKRV (78 aa). At serine 1796 the chain carries O-(pantetheine 4'-phosphoryl)serine.

Requires NADP(+) as cofactor. Pantetheine 4'-phosphate is required as a cofactor.

The enzyme catalyses icosanoyl-[(phenol)carboxyphthiodiolenone synthase] + 2 (S)-methylmalonyl-CoA + 3 malonyl-CoA + 5 NADPH + 10 H(+) = C32-carboxyphthiodiolenone-[(phenol)carboxyphthiodiolenone synthase] + 5 CO2 + 5 NADP(+) + 5 CoA + 2 H2O. The catalysed reaction is docosanoyl-[(phenol)carboxyphthiodiolenone synthase] + 2 (S)-methylmalonyl-CoA + 3 malonyl-CoA + 5 NADPH + 10 H(+) = C34-carboxyphthiodiolenone-[(phenol)carboxyphthiodiolenone synthase] + 5 CO2 + 5 NADP(+) + 5 CoA + 2 H2O. It catalyses the reaction 17-(4-hydroxyphenyl)heptadecanoyl-[(phenol)carboxyphthiodiolenone synthase] + 2 (S)-methylmalonyl-CoA + 3 malonyl-CoA + 5 NADPH + 10 H(+) = C35-(phenol)carboxyphthiodiolenone-[(phenol)carboxyphthiodiolenone synthase] + 5 CO2 + 5 NADP(+) + 5 CoA + 2 H2O. It carries out the reaction 19-(4-hydroxyphenyl)nonadecanoyl-[(phenol)carboxyphthiodiolenone synthase] + 2 (S)-methylmalonyl-CoA + 3 malonyl-CoA + 5 NADPH + 10 H(+) = C37-(phenol)carboxyphthiodiolenone-[(phenol)carboxyphthiodiolenone synthase] + 5 CO2 + 5 NADP(+) + 5 CoA + 2 H2O. It participates in lipid metabolism; fatty acid biosynthesis. Part of the PpsABCDE complex involved in the biosynthesis of the lipid core common to phthiocerols and phenolphthiocerols by successive additions of malonyl-CoA or methylmalonyl-CoA extender units. PpsA can accept as substrate the activated forms of either icosanoyl (C20), docosanoyl (C22) or lignoceroyl (C24) groups from FadD26, or a (4-hydroxyphenyl)-C17 or (4-hydroxyphenyl)-C19 fatty acyl from FadD29. PpsA initiates the biosynthesis and extends its substrate using a malonyl-CoA extender unit. The PpsB and PpsC proteins add the second and third malonyl-CoA extender units. PpsD adds an (R)-methylmalonyl unit and PpsE adds a second (R)-methylmalonyl unit. The incorporation of the methylmalonyl units results in formation of two branched methyl groups in the elongated product. The sequence is that of Phenolphthiocerol/phthiocerol polyketide synthase subunit A (ppsA) from Mycobacterium tuberculosis (strain CDC 1551 / Oshkosh).